The primary structure comprises 427 residues: Trigger factor (427 aa).

One can recognise a PPIase FKBP-type domain in the interval 163-248 (GDTVVIDFVG…IHEVKAKEVP (86 aa)).

It belongs to the FKBP-type PPIase family. Tig subfamily.

The protein resides in the cytoplasm. The catalysed reaction is [protein]-peptidylproline (omega=180) = [protein]-peptidylproline (omega=0). Functionally, involved in protein export. Acts as a chaperone by maintaining the newly synthesized protein in an open conformation. Functions as a peptidyl-prolyl cis-trans isomerase. This chain is Trigger factor, found in Streptococcus pneumoniae (strain Hungary19A-6).